The primary structure comprises 448 residues: uncharacterized protein (448 aa).

Residues 428–440 show a composition bias toward polar residues; it reads PFKTDCDPNNDND. The segment at 428–448 is disordered; it reads PFKTDCDPNNDNDLTPPAVFG.

This is an uncharacterized protein from Mycoplasma pneumoniae (strain ATCC 29342 / M129 / Subtype 1) (Mycoplasmoides pneumoniae).